The sequence spans 703 residues: Polyribonucleotide nucleotidyltransferase (703 aa).

Mg(2+)-binding residues include Asp487 and Asp493. One can recognise a KH domain in the interval 554–613 (PKMETIKIDPDKIRDVIGKGGATIRSICEDTGASIDIDDNGTVRIYAESKLAADEAIYRI). Residues 623-691 (GKLYRGKVER…ARGRIKLSMK (69 aa)) enclose the S1 motif domain.

It belongs to the polyribonucleotide nucleotidyltransferase family. In terms of assembly, component of the RNA degradosome, which is a multiprotein complex involved in RNA processing and mRNA degradation. The cofactor is Mg(2+).

The protein resides in the cytoplasm. It catalyses the reaction RNA(n+1) + phosphate = RNA(n) + a ribonucleoside 5'-diphosphate. Its function is as follows. Involved in mRNA degradation. Catalyzes the phosphorolysis of single-stranded polyribonucleotides processively in the 3'- to 5'-direction. This chain is Polyribonucleotide nucleotidyltransferase, found in Hahella chejuensis (strain KCTC 2396).